We begin with the raw amino-acid sequence, 600 residues long: MSRPSSRAIYLHRKEYSQSMASEPTLLQHRVEHLMTCKLGTQRVREPKDALQKLQEMDAQGRVWSQDLFLQVRDGWLHLLDIETKEELDSYRLDNIKAIDVALNTCSYNSILSVTVQESGLPGISTLLFQCQEVGAEQLRTSLQKALEEELEERPRFGVHHPSQDRWKGPPLERPLPIQQAPPLEQRFSPEHRFPPEQPHNMTSERSISPSSRSLTHYPSAREPNGFTLPPPPRRAPSPEDPERDEEVLNHVLRDIELFAGKLKEVQARNSHKKTKLGRKKKKSKNGITQAEYIDCFQKIKLSFNLLGKLALRMQETSAPEFVGLIFQTLKFILSQCPEAGLPAKVISPLLTPKAIDLLQSCLSPPEDTLWKSLGTSWTTSWADWTGSEPPPYQPTFYDGWQIPQPRSMMPITNQDSISLRGSRMRSSLHFPRDEPYNHNPEYEDSNLPLSSPSPGRAALKMQVLYEFEARNAQELTVAQGEILEVLDQSKRWWLVKNEAGLTGYIPSNILEPLPAGAPRGHRQPSFRAPMLRLSSKPEEVTAWLQAENFSTVTVRTLGSLMGSQLLHMRPGELQMLCPQEAPRIQARLDAVRRMLGMTH.

One can recognise a PTB domain in the interval glutamine 28–proline 155. Disordered regions lie at residues glutamate 152–aspartate 245 and leucine 429–serine 452. Positions serine 204–serine 214 are enriched in low complexity. Residue serine 238 is modified to Phosphoserine. The 60-residue stretch at arginine 457–alanine 516 folds into the SH3 domain.

This sequence belongs to the EPS8 family. As to quaternary structure, interacts with ABI1. Part of a complex that contains SOS1, ABI1 and EPS8L2. Interacts with FASLG. Detected in embryonic gut. Detected in adult testis, placenta, adrenal gland and intestine.

Its subcellular location is the cytoplasm. This chain is Epidermal growth factor receptor kinase substrate 8-like protein 3 (Eps8l3), found in Mus musculus (Mouse).